Here is a 129-residue protein sequence, read N- to C-terminus: Small ribosomal subunit protein uS8c (129 aa).

Belongs to the universal ribosomal protein uS8 family. Part of the 30S ribosomal subunit.

The protein localises to the plastid. The protein resides in the chloroplast. Functionally, one of the primary rRNA binding proteins, it binds directly to 16S rRNA central domain where it helps coordinate assembly of the platform of the 30S subunit. The protein is Small ribosomal subunit protein uS8c (rps8) of Oltmannsiellopsis viridis (Marine flagellate).